The primary structure comprises 1075 residues: DNA-directed RNA polymerase subunit beta (1075 aa).

This sequence belongs to the RNA polymerase beta chain family. In plastids the minimal PEP RNA polymerase catalytic core is composed of four subunits: alpha, beta, beta', and beta''. When a (nuclear-encoded) sigma factor is associated with the core the holoenzyme is formed, which can initiate transcription.

The protein resides in the plastid. It localises to the chloroplast. It carries out the reaction RNA(n) + a ribonucleoside 5'-triphosphate = RNA(n+1) + diphosphate. Functionally, DNA-dependent RNA polymerase catalyzes the transcription of DNA into RNA using the four ribonucleoside triphosphates as substrates. The chain is DNA-directed RNA polymerase subunit beta from Sorghum bicolor (Sorghum).